The following is a 335-amino-acid chain: Deoxyhypusine hydroxylase (335 aa).

HEAT-like PBS-type repeat units follow at residues 71–97 (LKHE…VAKD), 104–130 (CRHE…LRDN), 200–233 (LRYR…GLKD), 238–264 (FRHE…ALSN), and 271–298 (VRHE…FLND). His-73, Glu-74, His-106, and Glu-107 together coordinate Fe cation. Fe cation is bound by residues His-240, Glu-241, His-273, and Glu-274.

It belongs to the deoxyhypusine hydroxylase family. The cofactor is Fe(2+).

The protein resides in the cytoplasm. It localises to the nucleus. The enzyme catalyses [eIF5A protein]-deoxyhypusine + AH2 + O2 = [eIF5A protein]-hypusine + A + H2O. It functions in the pathway protein modification; eIF5A hypusination. In terms of biological role, catalyzes the hydroxylation of the N(6)-(4-aminobutyl)-L-lysine intermediate to form hypusine, an essential post-translational modification only found in mature eIF-5A factor. This is Deoxyhypusine hydroxylase (lia1) from Aspergillus fumigatus (strain ATCC MYA-4609 / CBS 101355 / FGSC A1100 / Af293) (Neosartorya fumigata).